Here is a 416-residue protein sequence, read N- to C-terminus: D-amino acid dehydrogenase (416 aa).

FAD is bound at residue 3 to 17 (ITILGSGVIGVTTAY).

It belongs to the DadA oxidoreductase family. FAD is required as a cofactor.

The catalysed reaction is a D-alpha-amino acid + A + H2O = a 2-oxocarboxylate + AH2 + NH4(+). It participates in amino-acid degradation; D-alanine degradation; NH(3) and pyruvate from D-alanine: step 1/1. Functionally, oxidative deamination of D-amino acids. The chain is D-amino acid dehydrogenase from Brucella anthropi (strain ATCC 49188 / DSM 6882 / CCUG 24695 / JCM 21032 / LMG 3331 / NBRC 15819 / NCTC 12168 / Alc 37) (Ochrobactrum anthropi).